The chain runs to 508 residues: Endo-4-O-sulfatase (508 aa).

Ser-84 carries the post-translational modification 3-oxoalanine (Ser).

It belongs to the sulfatase family. Post-translationally, the conversion to 3-oxoalanine (also known as C-formylglycine, FGly), of a serine or cysteine residue in prokaryotes and of a cysteine residue in eukaryotes, is critical for catalytic activity.

In terms of biological role, endosulfatase involved in the degradation of the glycosaminoglycans (GAGs) chondroitin sulfate (CS) and dermatan sulfate (DS). Efficiently hydrolyzes sulfate groups from a broad range of substrate size, including disaccharide to high molecular weight CS and DS polymers. Has a strict specificity for the 4-O-sulfate groups of galactosamine. GAG-specific sulfatases play a key role in the persistence of the major human gut symbiont B.thetaiotaomicron in the host gastrointestinal tract. This is Endo-4-O-sulfatase from Bacteroides thetaiotaomicron (strain ATCC 29148 / DSM 2079 / JCM 5827 / CCUG 10774 / NCTC 10582 / VPI-5482 / E50).